Consider the following 284-residue polypeptide: Avenin-like b11 (284 aa).

The N-terminal stretch at 1–18 is a signal peptide; the sequence is MKVFILALLALTATTAIA.

The protein belongs to the prolamin family. Contains disulfide bonds.

Seed storage protein. Might be integrated via inter-chain disulfide bonds within the glutenin polymer. This is Avenin-like b11 from Triticum aestivum (Wheat).